A 1058-amino-acid polypeptide reads, in one-letter code: Zinc finger protein 865 (1058 aa).

Disordered regions lie at residues 1 to 24, 58 to 134, and 156 to 201; these read MEANQAGSGAGGGGSSGIGGEDGV, LPCT…PPLF, and GNLK…ACDP. A compositionally biased stretch (gly residues) spans 8-21; that stretch reads SGAGGGGSSGIGGE. The segment covering 61 to 78 has biased composition (pro residues); that stretch reads TPGPPPQPPPQPPPPQYD. Positions 93 to 113 are enriched in low complexity; it reads SSSSSSSSSSSSSSSSSSSSS. Residues 120–133 show a composition bias toward pro residues; that stretch reads PPLPPTFGAPPPPL. Low complexity predominate over residues 172 to 187; it reads GLGTPTGTPGPLTTPS. 2 consecutive C2H2-type zinc fingers follow at residues 220–242 and 248–270; these read FPCGVCQKSFKQSSHLVQHMLVH and YECGICGRTYNHVSSLIRHRRCH. Residues 269–342 are disordered; sequence CHKDVPPTPT…PPGVAMPPSA (74 aa). Residues 294–324 are compositionally biased toward low complexity; sequence PVSTASATASSDPAAVSSGPSATPATPATST. C2H2-type zinc fingers lie at residues 350-372, 378-400, 407-429, 439-461, 546-568, 574-596, 602-624, 664-686, and 692-714; these read FACSLCWKVFKKPSHLHQHQIIH, FSCSVCSKSFNRRESLKRHVKTH, LPCGICGKVFRDASYLLKHQAAH, YPCDLCGKTYSAPQSLLRHKAAH, FCCGICGRAFGRRETLKRHERIH, HQCPVCGKRFRESFHLSKHHVVH, YKCELCGKVFGYPQSLTRHRQVH, YACSDCGEHFPDLFHVMSHKEAH, and YGCDACGKTFGFIENLMWHKLVH. Residues 459 to 486 form a disordered region; sequence AAHAPPVATEPAKDGAASVPQPPPPFPP. The tract at residues 721–743 is disordered; sequence LLAPTPSGPQSSDGGSSGGGTDA. C2H2-type zinc fingers lie at residues 791–813, 819–841, 847–869, 875–897, 903–925, 931–953, 959–981, 988–1010, and 1016–1038; these read FSCATCGQSFKHFLGLVTHKYVH, LGCGLCGQSFAGAYDLLLHRRSH, FRCPVCGKRFWEAALLMRHQRCH, YRCGVCGRGFLRSWYLRQHRVVH, FKCGVCAKHFAQSSSLAEHRRLH, QRCGACGKTFRYRSNLLEHQRLH, YRCEHCGKGFFYLSSVLRHQRAH, LRCPACLKAFKDPGYFRKHLAAH, and FRCSSCGEGFANTYGLKKHRLMH. Residue lysine 801 forms a Glycyl lysine isopeptide (Lys-Gly) (interchain with G-Cter in SUMO2) linkage. Residue lysine 1039 forms a Glycyl lysine isopeptide (Lys-Gly) (interchain with G-Cter in SUMO2) linkage.

Belongs to the krueppel C2H2-type zinc-finger protein family.

Its subcellular location is the nucleus. In terms of biological role, may be involved in transcriptional regulation. This chain is Zinc finger protein 865 (Znf865), found in Mus musculus (Mouse).